Here is a 447-residue protein sequence, read N- to C-terminus: 3-phosphoshikimate 1-carboxyvinyltransferase (447 aa).

The disordered stretch occupies residues 1 to 22 (MTPSLKRLSGAMRARPAPALSG). 3-phosphoshikimate is bound by residues Lys-30, Ser-31, and Arg-35. Residue Lys-30 coordinates phosphoenolpyruvate. Residues Gly-102 and Arg-130 each contribute to the phosphoenolpyruvate site. 3-phosphoshikimate contacts are provided by Ser-173, Gln-175, Asp-325, and Lys-352. Gln-175 is a binding site for phosphoenolpyruvate. Residue Asp-325 is the Proton acceptor of the active site. Positions 356 and 401 each coordinate phosphoenolpyruvate.

It belongs to the EPSP synthase family. Monomer.

The protein localises to the cytoplasm. The catalysed reaction is 3-phosphoshikimate + phosphoenolpyruvate = 5-O-(1-carboxyvinyl)-3-phosphoshikimate + phosphate. Its pathway is metabolic intermediate biosynthesis; chorismate biosynthesis; chorismate from D-erythrose 4-phosphate and phosphoenolpyruvate: step 6/7. Catalyzes the transfer of the enolpyruvyl moiety of phosphoenolpyruvate (PEP) to the 5-hydroxyl of shikimate-3-phosphate (S3P) to produce enolpyruvyl shikimate-3-phosphate and inorganic phosphate. The protein is 3-phosphoshikimate 1-carboxyvinyltransferase of Maricaulis maris (strain MCS10) (Caulobacter maris).